A 683-amino-acid polypeptide reads, in one-letter code: PTS system mannose-specific EIIBCA component (683 aa).

The PTS EIIB type-1 domain maps to 1–89; the sequence is MASKLTTTSQ…LKLDGMKHFA (89 aa). C28 acts as the Phosphocysteine intermediate; for EIIB activity in catalysis. The PTS EIIC type-1 domain occupies 117-476; sequence EFLSDTFRPI…NEERDEARAK (360 aa). Transmembrane regions (helical) follow at residues 126-146, 162-182, 193-213, 225-245, 260-280, 303-323, 344-364, 376-396, 409-429, and 442-462; these read ILWA…ADTF, YVFL…MVGA, WIGA…LGSA, VLND…GLYW, MVFV…FLLG, FILS…GLHW, PMGA…LLSI, LGGM…YGVL, GCLA…AFVF, and LGYT…VLAL. In terms of domain architecture, PTS EIIA type-1 spans 550-654; the sequence is DPIFAAGKLG…PLITPVVVSN (105 aa). The Tele-phosphohistidine intermediate; for EIIA activity role is filled by H602.

Its subcellular location is the cell membrane. It catalyses the reaction D-mannose(out) + N(pros)-phospho-L-histidyl-[protein] = D-mannose 6-phosphate(in) + L-histidyl-[protein]. The phosphoenolpyruvate-dependent sugar phosphotransferase system (sugar PTS), a major carbohydrate active -transport system, catalyzes the phosphorylation of incoming sugar substrates concomitantly with their translocation across the cell membrane. This system is involved in mannose transport. The sequence is that of PTS system mannose-specific EIIBCA component (ptsM) from Corynebacterium glutamicum (strain ATCC 13032 / DSM 20300 / JCM 1318 / BCRC 11384 / CCUG 27702 / LMG 3730 / NBRC 12168 / NCIMB 10025 / NRRL B-2784 / 534).